Here is a 553-residue protein sequence, read N- to C-terminus: Protein YloV (553 aa).

In terms of domain architecture, DhaL spans 9–201 (RTFAEMILAG…LLCVYEGFLA (193 aa)).

The chain is Protein YloV (yloV) from Bacillus subtilis (strain 168).